Here is a 340-residue protein sequence, read N- to C-terminus: Chitinase 7 (340 aa).

An N-terminal signal peptide occupies residues 1-32 (MIAARAANLQVAMKALALAVLALAYAAATARA). A Chitin-binding type-1 domain is found at 33–73 (EQCGRQAGGARCPNRLCCSRWGWCGLTDDYCKGGCQSQCRV). Disulfide bonds link cysteine 35–cysteine 50, cysteine 44–cysteine 56, cysteine 49–cysteine 63, cysteine 67–cysteine 71, cysteine 118–cysteine 173, cysteine 185–cysteine 193, and cysteine 293–cysteine 323.

The protein belongs to the glycosyl hydrolase 19 family. Chitinase class I subfamily. Expressed in pistils, stamens and lodicules.

The catalysed reaction is Random endo-hydrolysis of N-acetyl-beta-D-glucosaminide (1-&gt;4)-beta-linkages in chitin and chitodextrins.. In terms of biological role, hydrolyzes chitin and may play a role in defense against fungal pathogens containing chitin. The sequence is that of Chitinase 7 (Cht7) from Oryza sativa subsp. indica (Rice).